A 400-amino-acid polypeptide reads, in one-letter code: MSESVRTNTSIWSKGMLSVIVAQFLSAFGDNALLFATLALLKAQFYPDWSQPVLQMVFVGAYILFAPFVGQMADSFAKGRVMMVANGLKLAGAAGICLGVNPFVGYTLVGIGAAAYSPAKYGILGELTTGDKLVKANGLMEASTIAAILLGSVAGGVLADWHVIAALVACALAYAGAVAANLFIPKLVAARPGQSWRLSAMTRSFFSACVVLWRNGETRFSLVGTGLFWGAGVTLRFLLVLWVPVALGITDNATPTYLNAMVAVGIVVGAGAAAKLVTLETVSRCMPAGILIGVVVAIFSLQHALLPAYALLLLIGMLGGFFVVPLNALLQERGKKSVGAGNAIAVQNLGENSAMLLMLGLYSLAVLVGVPAVAIGIGFGVLFALAIAALWIWQRRQASY.

Helical transmembrane passes span 19-39 (VIVA…ATLA), 53-73 (VLQM…GQMA), 91-111 (AGAA…LVGI), 139-159 (LMEA…GVLA), 164-184 (IAAL…NLFI), 195-213 (SWRL…VVLW), 227-247 (LFWG…PVAL), 257-277 (YLNA…AKLV), 281-301 (TVSR…IFSL), 304-324 (ALLP…FFVV), 352-372 (NSAM…GVPA), and 373-393 (VAIG…LWIW).

The protein belongs to the major facilitator superfamily. LplT (TC 2.A.1.42) family.

Its subcellular location is the cell inner membrane. Catalyzes the facilitated diffusion of 2-acyl-glycero-3-phosphoethanolamine (2-acyl-GPE) into the cell. The polypeptide is Lysophospholipid transporter LplT (Salmonella enteritidis PT4 (strain P125109)).